The chain runs to 288 residues: THO complex subunit 4D (288 aa).

Positions 1-55 (MSGALNMTLDEIVKRGKTARSGGRGISRGRGRGRGGGGRGAGPARRGPLAVNARP) are disordered. Residue Ser-2 is modified to N-acetylserine. The RRM domain occupies 93–170 (TRLHVTNLDQ…RPMRLEILGG (78 aa)). The disordered stretch occupies residues 201 to 288 (QGGGGRGRVR…SYHADAMNTS (88 aa)). A compositionally biased stretch (gly residues) spans 232 to 260 (QGGGMRGGRGGFRARGRGNGGRGRGGGRG). The segment covering 264–281 (KPVEKSAADLDKDLESYH) has biased composition (basic and acidic residues).

Belongs to the ALYREF family. Interacts with PARP1. Interacts with EIF4A3.

The protein resides in the nucleus. Its subcellular location is the nucleoplasm. It localises to the nucleolus. Functionally, export adapter involved in nuclear export of spliced and unspliced mRNA. Plays a role in disease resistance. Mediates multiple defense responses triggered by NEP1, including stomatal closure, hypersensitive cell death (HCD) and defense-related gene expression. The chain is THO complex subunit 4D from Arabidopsis thaliana (Mouse-ear cress).